Here is a 143-residue protein sequence, read N- to C-terminus: Holo-[acyl-carrier-protein] synthase (143 aa).

The Mg(2+) site is built by Asp-9 and Glu-63.

The protein belongs to the P-Pant transferase superfamily. AcpS family. Mg(2+) serves as cofactor.

The protein localises to the cytoplasm. The catalysed reaction is apo-[ACP] + CoA = holo-[ACP] + adenosine 3',5'-bisphosphate + H(+). In terms of biological role, transfers the 4'-phosphopantetheine moiety from coenzyme A to a Ser of acyl-carrier-protein. This is Holo-[acyl-carrier-protein] synthase from Burkholderia pseudomallei (strain 668).